Here is a 545-residue protein sequence, read N- to C-terminus: Chaperonin GroEL 2 (545 aa).

ATP contacts are provided by residues T29–P32, D86–T90, G413, N479–A481, and D495.

This sequence belongs to the chaperonin (HSP60) family. As to quaternary structure, forms a cylinder of 14 subunits composed of two heptameric rings stacked back-to-back. Interacts with the co-chaperonin GroES.

The protein resides in the cytoplasm. The enzyme catalyses ATP + H2O + a folded polypeptide = ADP + phosphate + an unfolded polypeptide.. Its function is as follows. Together with its co-chaperonin GroES, plays an essential role in assisting protein folding. The GroEL-GroES system forms a nano-cage that allows encapsulation of the non-native substrate proteins and provides a physical environment optimized to promote and accelerate protein folding. The protein is Chaperonin GroEL 2 of Prochlorococcus marinus (strain MIT 9215).